The sequence spans 157 residues: MSKVSGGGPCSRRRDGVDPALRSRARRRALQAVYAWQISGGVAKQVIAHFAHEQAYEVADLVYFEDLVEGVLTHCAELDEKLTPYLDRTIEEVDAIERAVLRLGAYELLYRQDVPYRVVINEAIMTAKRFGSKYGHTYVNGVLDRAALALRKVEVLG.

Belongs to the NusB family.

Functionally, involved in transcription antitermination. Required for transcription of ribosomal RNA (rRNA) genes. Binds specifically to the boxA antiterminator sequence of the ribosomal RNA (rrn) operons. The sequence is that of Transcription antitermination protein NusB from Xylella fastidiosa (strain Temecula1 / ATCC 700964).